We begin with the raw amino-acid sequence, 236 residues long: 7-cyano-7-deazaguanine synthase 2 (236 aa).

Residue 11 to 21 coordinates ATP; sequence FSGGQDSATCL. C199, C214, C217, and C220 together coordinate Zn(2+).

It belongs to the QueC family. Zn(2+) is required as a cofactor.

The catalysed reaction is 7-carboxy-7-deazaguanine + NH4(+) + ATP = 7-cyano-7-deazaguanine + ADP + phosphate + H2O + H(+). It functions in the pathway purine metabolism; 7-cyano-7-deazaguanine biosynthesis. Catalyzes the ATP-dependent conversion of 7-carboxy-7-deazaguanine (CDG) to 7-cyano-7-deazaguanine (preQ(0)). This Sphingopyxis alaskensis (strain DSM 13593 / LMG 18877 / RB2256) (Sphingomonas alaskensis) protein is 7-cyano-7-deazaguanine synthase 2.